Reading from the N-terminus, the 189-residue chain is Probable nicotinate-nucleotide adenylyltransferase (189 aa).

Belongs to the NadD family.

It catalyses the reaction nicotinate beta-D-ribonucleotide + ATP + H(+) = deamido-NAD(+) + diphosphate. The protein operates within cofactor biosynthesis; NAD(+) biosynthesis; deamido-NAD(+) from nicotinate D-ribonucleotide: step 1/1. Functionally, catalyzes the reversible adenylation of nicotinate mononucleotide (NaMN) to nicotinic acid adenine dinucleotide (NaAD). The protein is Probable nicotinate-nucleotide adenylyltransferase of Bacillus anthracis (strain CDC 684 / NRRL 3495).